The primary structure comprises 251 residues: Triosephosphate isomerase (251 aa).

Residue 9-11 (NWK) coordinates substrate. Catalysis depends on His95, which acts as the Electrophile. Residue Glu167 is the Proton acceptor of the active site. Substrate-binding positions include Gly173, Ser213, and 234-235 (GG).

Belongs to the triosephosphate isomerase family. Homodimer.

It localises to the cytoplasm. It carries out the reaction D-glyceraldehyde 3-phosphate = dihydroxyacetone phosphate. Its pathway is carbohydrate biosynthesis; gluconeogenesis. The protein operates within carbohydrate degradation; glycolysis; D-glyceraldehyde 3-phosphate from glycerone phosphate: step 1/1. Involved in the gluconeogenesis. Catalyzes stereospecifically the conversion of dihydroxyacetone phosphate (DHAP) to D-glyceraldehyde-3-phosphate (G3P). The polypeptide is Triosephosphate isomerase (Ligilactobacillus salivarius (strain UCC118) (Lactobacillus salivarius)).